The sequence spans 2030 residues: Dedicator of cytokinesis protein 3 (2030 aa).

Positions 6–67 (EEEKYGVVIC…PANYIHLKKA (62 aa)) constitute an SH3 domain. The region spanning 421-599 (RNDLYLTLEK…ESFFISTQLS (179 aa)) is the C2 DOCK-type domain. A DOCKER domain is found at 1228-1635 (KSEINKEEMY…LYHEFPGLDK (408 aa)). Disordered regions lie at residues 1641-1662 (SGTSTPRGNVLASHSPMSPESI), 1734-1771 (SSSQASPSSSSLSSTHSAPSQMITSAPSSARGSPSLPD), 1849-1927 (DTPP…ADED), and 1951-2030 (QPCR…RGEQ). Ser1658 is subject to Phosphoserine. Over residues 1734 to 1754 (SSSQASPSSSSLSSTHSAPSQ) the composition is skewed to low complexity. The segment covering 1755–1765 (MITSAPSSARG) has biased composition (polar residues). Over residues 1880–1902 (GSNSTLSGSASSGVSSLSESNFG) the composition is skewed to low complexity. Residues 1967-1977 (PMDPPALPPKP) show a composition bias toward pro residues. The short motif at 1970 to 1976 (PPALPPK) is the SH3-binding element. Composition is skewed to basic and acidic residues over residues 1984–2001 (ALEHDEGVLLREETERPR) and 2014–2030 (AKEEQARMAWEHGRGEQ).

Belongs to the DOCK family. In terms of assembly, interacts with presenilin proteins PSEN1 and PSEN2. Interacts with CRK. As to expression, in normal brains, it is localized in the neuropil, and occasionally in the pyramidal cells, while in Alzheimer disease brains, it is associated with neurofibrillary tangles.

It is found in the cytoplasm. Functionally, potential guanine nucleotide exchange factor (GEF). GEF proteins activate some small GTPases by exchanging bound GDP for free GTP. Its interaction with presenilin proteins as well as its ability to stimulate Tau/MAPT phosphorylation suggest that it may be involved in Alzheimer disease. Ectopic expression in nerve cells decreases the secretion of amyloid-beta APBA1 protein and lowers the rate of cell-substratum adhesion, suggesting that it may affect the function of some small GTPase involved in the regulation of actin cytoskeleton or cell adhesion receptors. The sequence is that of Dedicator of cytokinesis protein 3 (DOCK3) from Homo sapiens (Human).